The sequence spans 248 residues: Probable transcriptional regulatory protein Msil_2305 (248 aa).

This sequence belongs to the TACO1 family.

The protein localises to the cytoplasm. In Methylocella silvestris (strain DSM 15510 / CIP 108128 / LMG 27833 / NCIMB 13906 / BL2), this protein is Probable transcriptional regulatory protein Msil_2305.